Consider the following 544-residue polypeptide: Elongator complex protein 3 (544 aa).

A Radical SAM core domain is found at Arg-79–Pro-369. Residues Cys-96, Cys-106, and Cys-109 each coordinate [4Fe-4S] cluster. Acetyl-CoA-binding positions include Lys-161, Glu-472–Val-475, Phe-495–Thr-497, and Tyr-528. Residues Thr-393–Leu-544 form the N-acetyltransferase domain.

Belongs to the ELP3 family. Component of the elongator complex. The cofactor is [4Fe-4S] cluster.

The protein resides in the cytoplasm. The enzyme catalyses uridine(34) in tRNA + acetyl-CoA + S-adenosyl-L-methionine + H2O = 5-(carboxymethyl)uridine(34) in tRNA + 5'-deoxyadenosine + L-methionine + CoA + 2 H(+). It participates in tRNA modification; 5-methoxycarbonylmethyl-2-thiouridine-tRNA biosynthesis. Its function is as follows. Catalytic tRNA acetyltransferase subunit of the elongator complex which is required for multiple tRNA modifications, including mcm5U (5-methoxycarbonylmethyl uridine), mcm5s2U (5-methoxycarbonylmethyl-2-thiouridine), and ncm5U (5-carbamoylmethyl uridine). In the elongator complex, acts as a tRNA uridine(34) acetyltransferase, which mediates formation of carboxymethyluridine in the wobble base at position 34 in tRNAs. The sequence is that of Elongator complex protein 3 from Schizosaccharomyces pombe (strain 972 / ATCC 24843) (Fission yeast).